A 602-amino-acid chain; its full sequence is Translation initiation factor IF-2 (602 aa).

Positions 112 to 281 (KRAPIITIMG…LLLCEVLDLK (170 aa)) constitute a tr-type G domain. Residues 121-128 (GHVDHGKT) are G1. A GTP-binding site is contributed by 121-128 (GHVDHGKT). The tract at residues 146–150 (GITQH) is G2. The segment at 167–170 (DTPG) is G3. GTP is bound by residues 167–171 (DTPGH) and 221–224 (NKMD). The interval 221–224 (NKMD) is G4. The tract at residues 257–259 (SAL) is G5.

This sequence belongs to the TRAFAC class translation factor GTPase superfamily. Classic translation factor GTPase family. IF-2 subfamily.

It is found in the cytoplasm. In terms of biological role, one of the essential components for the initiation of protein synthesis. Protects formylmethionyl-tRNA from spontaneous hydrolysis and promotes its binding to the 30S ribosomal subunits. Also involved in the hydrolysis of GTP during the formation of the 70S ribosomal complex. The chain is Translation initiation factor IF-2 from Mycoplasmopsis synoviae (strain 53) (Mycoplasma synoviae).